Here is a 217-residue protein sequence, read N- to C-terminus: Octanoyltransferase (217 aa).

One can recognise a BPL/LPL catalytic domain in the interval 32 to 207 (DDSADEIWLV…HMIKKLNATQ (176 aa)). Substrate-binding positions include 71–78 (RGGQVTYH), 138–140 (SLG), and 151–153 (GLA). Cys-169 functions as the Acyl-thioester intermediate in the catalytic mechanism.

Belongs to the LipB family.

It localises to the cytoplasm. It catalyses the reaction octanoyl-[ACP] + L-lysyl-[protein] = N(6)-octanoyl-L-lysyl-[protein] + holo-[ACP] + H(+). The protein operates within protein modification; protein lipoylation via endogenous pathway; protein N(6)-(lipoyl)lysine from octanoyl-[acyl-carrier-protein]: step 1/2. Its function is as follows. Catalyzes the transfer of endogenously produced octanoic acid from octanoyl-acyl-carrier-protein onto the lipoyl domains of lipoate-dependent enzymes. Lipoyl-ACP can also act as a substrate although octanoyl-ACP is likely to be the physiological substrate. This chain is Octanoyltransferase, found in Pseudoalteromonas translucida (strain TAC 125).